The following is a 430-amino-acid chain: MSEPVAMTLLEDWCRGMGMDIHRSLLVTGIPEYCSHAEIEETLNGVLLPLGTYRVLNKIFLRQENVKAALVEVSEGVNLSSIPREFPGRGGVWRVVCRDPTQDDDFLKNLNEFLDGEGRTWEDMVRLLKLNPNPPLPNSNQPPPNWAEALGLLLGAVVQVIFYMDAAIRSRDEEARAEEAAEAELMEAWASTARKRVKKEPGLGVEVGSAFKMEDRNYWKNTEDHGDPPKPLVRRPGGKIRSRRRKQKKNLKQEPICWRKSQGSNYNSNYNKVNLEAGEAAQSSEIPESVKSNKKPFVKQEETVWKKKRVWRDPSDLPRSALPAADSPGNLEDSDQDGGPENPAKKKAMTWASNKIPVPTRKKKKMVSLGTLSYVLLDAEATKNKTAILKKGLGARRAVSVPHDAPASTSRPQKTKLGAFPRVSKDSRKL.

The span at 219-228 (WKNTEDHGDP) shows a compositional bias: basic and acidic residues. 3 disordered regions span residues 219 to 270 (WKNT…NSNY), 313 to 364 (DPSD…RKKK), and 392 to 430 (GLGA…SRKL). The segment covering 232-250 (LVRRPGGKIRSRRRKQKKN) has biased composition (basic residues). Positions 261 to 270 (SQGSNYNSNY) are enriched in polar residues.

This sequence belongs to the PNMA family.

This chain is Paraneoplastic antigen-like protein 8A, found in Mus musculus (Mouse).